The sequence spans 198 residues: Thymidine kinase (198 aa).

Residues 15–22 (GCMFSGKT) and 87–90 (DEAQ) each bind ATP. Catalysis depends on glutamate 88, which acts as the Proton acceptor. Residues cysteine 144, cysteine 147, cysteine 182, and histidine 185 each coordinate Zn(2+).

This sequence belongs to the thymidine kinase family. Homotetramer.

Its subcellular location is the cytoplasm. The enzyme catalyses thymidine + ATP = dTMP + ADP + H(+). This chain is Thymidine kinase, found in Coprothermobacter proteolyticus (strain ATCC 35245 / DSM 5265 / OCM 4 / BT).